We begin with the raw amino-acid sequence, 156 residues long: Endoribonuclease YbeY (156 aa).

Residues His122, His126, and His132 each coordinate Zn(2+).

It belongs to the endoribonuclease YbeY family. Zn(2+) serves as cofactor.

The protein resides in the cytoplasm. Single strand-specific metallo-endoribonuclease involved in late-stage 70S ribosome quality control and in maturation of the 3' terminus of the 16S rRNA. The protein is Endoribonuclease YbeY of Bacillus cereus (strain G9842).